We begin with the raw amino-acid sequence, 408 residues long: Argininosuccinate synthase (408 aa).

ATP-binding positions include 9–17 (AYSGGLDTS) and alanine 36. 2 residues coordinate L-citrulline: tyrosine 87 and serine 92. ATP is bound at residue glycine 117. 3 residues coordinate L-aspartate: threonine 119, asparagine 123, and aspartate 124. Asparagine 123 lines the L-citrulline pocket. L-citrulline contacts are provided by arginine 127, serine 176, serine 185, glutamate 261, and tyrosine 273.

It belongs to the argininosuccinate synthase family. Type 1 subfamily. As to quaternary structure, homotetramer.

It localises to the cytoplasm. It carries out the reaction L-citrulline + L-aspartate + ATP = 2-(N(omega)-L-arginino)succinate + AMP + diphosphate + H(+). Its pathway is amino-acid biosynthesis; L-arginine biosynthesis; L-arginine from L-ornithine and carbamoyl phosphate: step 2/3. This chain is Argininosuccinate synthase, found in Deinococcus deserti (strain DSM 17065 / CIP 109153 / LMG 22923 / VCD115).